A 159-amino-acid chain; its full sequence is NADH-quinone oxidoreductase subunit I (159 aa).

2 4Fe-4S ferredoxin-type domains span residues 51 to 80 (RRYENGEERCIACKLCEAICPAQAIVIEAD) and 90 to 119 (TRYDIDMTKCIYCGLCQEACPVDAIVEGPN). 8 residues coordinate [4Fe-4S] cluster: Cys-60, Cys-63, Cys-66, Cys-70, Cys-99, Cys-102, Cys-105, and Cys-109.

This sequence belongs to the complex I 23 kDa subunit family. NDH-1 is composed of 14 different subunits. Subunits NuoA, H, J, K, L, M, N constitute the membrane sector of the complex. [4Fe-4S] cluster serves as cofactor.

The protein localises to the cell inner membrane. The enzyme catalyses a quinone + NADH + 5 H(+)(in) = a quinol + NAD(+) + 4 H(+)(out). In terms of biological role, NDH-1 shuttles electrons from NADH, via FMN and iron-sulfur (Fe-S) centers, to quinones in the respiratory chain. The immediate electron acceptor for the enzyme in this species is believed to be ubiquinone. Couples the redox reaction to proton translocation (for every two electrons transferred, four hydrogen ions are translocated across the cytoplasmic membrane), and thus conserves the redox energy in a proton gradient. This is NADH-quinone oxidoreductase subunit I from Rickettsia conorii (strain ATCC VR-613 / Malish 7).